We begin with the raw amino-acid sequence, 323 residues long: MGNLLKVLTREIENYPHFFLDFENAQPTDGEREVWNQISAVLQDSESMLADLQAYKGAGQEIRDAIQNPNDIQLQEKAWNSVCPLVVRLKRFYEFSLRLEKALQSLLESLTCPPYTPTQHLEREQALAKEFAEILHFTLRFDELKMRNPAIQNDFSYYRRTISRNRINNMHLDIENEVNNEMANRMSLFYAEATPMLKTLSNATTHFVSENKTLPIENTTDCLSTMASVCKVMLETPEYRSRFTSEETLMFCMRVMVGVIILYDHVHPVGAFSKTSKIDMKGCIKVLKEQPPDTVEGLLNALRFTTKHLNDESTSKQIRAMLQ.

The protein belongs to the CYRI family.

The protein resides in the membrane. Its function is as follows. May negatively regulate RAC1 signaling and RAC1-driven cytoskeletal remodeling. May regulate chemotaxis, cell migration and epithelial polarization by controlling the polarity, plasticity, duration and extent of protrusions. The protein is CYFIP-related Rac1 interactor A (CYRIA) of Gallus gallus (Chicken).